We begin with the raw amino-acid sequence, 178 residues long: ATP synthase subunit delta (178 aa).

It belongs to the ATPase delta chain family. In terms of assembly, F-type ATPases have 2 components, F(1) - the catalytic core - and F(0) - the membrane proton channel. F(1) has five subunits: alpha(3), beta(3), gamma(1), delta(1), epsilon(1). F(0) has three main subunits: a(1), b(2) and c(10-14). The alpha and beta chains form an alternating ring which encloses part of the gamma chain. F(1) is attached to F(0) by a central stalk formed by the gamma and epsilon chains, while a peripheral stalk is formed by the delta and b chains.

The protein resides in the cell inner membrane. Its function is as follows. F(1)F(0) ATP synthase produces ATP from ADP in the presence of a proton or sodium gradient. F-type ATPases consist of two structural domains, F(1) containing the extramembraneous catalytic core and F(0) containing the membrane proton channel, linked together by a central stalk and a peripheral stalk. During catalysis, ATP synthesis in the catalytic domain of F(1) is coupled via a rotary mechanism of the central stalk subunits to proton translocation. This protein is part of the stalk that links CF(0) to CF(1). It either transmits conformational changes from CF(0) to CF(1) or is implicated in proton conduction. The protein is ATP synthase subunit delta of Pseudomonas fluorescens (strain Pf0-1).